The primary structure comprises 253 residues: MLLDDQLKYWVLLPISIVMVLTGVLKQYIMTLITGSSANEAQPRVKLTEWQYLQWAQLLIGNGGNLSSDAFAAKKEFLVKDLTEERHLAKAKQQDGSQAGEVPNPFNDPSMSNAMMNMAKGNMASFIPQTIIMWWVNHFFAGFILMQLPFPLTAKFKEMLQTGIICQDLDVRWVSSISWYFISVLGLNPVYNLIGLNDQDMGIQAGIGGPQGPQGPPQSQVDKAMHAMANDLTIIQHETCLDNVEQRVLKQYM.

A run of 3 helical transmembrane segments spans residues 10–30 (WVLLPISIVMVLTGVLKQYIM), 126–146 (FIPQTIIMWWVNHFFAGFILM), and 176–196 (SISWYFISVLGLNPVYNLIGL).

Belongs to the EMC3 family. As to quaternary structure, component of the ER membrane protein complex (EMC), which is composed of EMC1, EMC2, EMC3, EMC4, EMC5 and EMC6.

It localises to the endoplasmic reticulum membrane. In terms of biological role, the EMC seems to be required for efficient folding of proteins in the endoplasmic reticulum (ER). In Saccharomyces cerevisiae (strain YJM789) (Baker's yeast), this protein is ER membrane protein complex subunit 3 (AIM27).